The sequence spans 115 residues: uncharacterized protein (115 aa).

Residues 90–100 (THFGRPATRRR) are compositionally biased toward basic residues. Positions 90–115 (THFGRPATRRRPLGEREVNPSARSLG) are disordered.

This is an uncharacterized protein from Saccharomyces cerevisiae (strain ATCC 204508 / S288c) (Baker's yeast).